Here is an 809-residue protein sequence, read N- to C-terminus: Probable disease resistance protein At5g66900 (809 aa).

An RPW8 domain is found at 1–150 (MNDWASLGIG…LSKRMDLLSV (150 aa)). Positions 50 to 86 (PLTQKIDSMQKELDFGVKELKELRDTIERADVAVRKF) form a coiled coil. NB-ARC domains are found at residues 153-280 (PVFR…DDVW) and 339-438 (SPDE…DMWV). 194–201 (APPGCGKT) is an ATP binding site. A coiled-coil region spans residues 494 to 515 (QSEFKENLERKRLNLEILENTF). 4 LRR repeats span residues 650–672 (KLQE…ISEI), 674–696 (SLKT…IGNL), 698–720 (RLEV…TEGL), and 722–744 (NLRF…IGKL).

It belongs to the disease resistance NB-LRR family.

Probable disease resistance protein. The chain is Probable disease resistance protein At5g66900 from Arabidopsis thaliana (Mouse-ear cress).